Consider the following 76-residue polypeptide: UPF0248 protein MmarC7_1289 (76 aa).

This sequence belongs to the UPF0248 family.

The protein is UPF0248 protein MmarC7_1289 of Methanococcus maripaludis (strain C7 / ATCC BAA-1331).